Consider the following 547-residue polypeptide: Probable terpene synthase 3 (547 aa).

Mg(2+)-binding residues include Asp-298, Asp-302, and Glu-451. Positions 298-302 (DDIYD) match the DDXXD motif motif.

Belongs to the terpene synthase family. The cofactor is Mg(2+).

Probable sesquiterpene synthase. In Ricinus communis (Castor bean), this protein is Probable terpene synthase 3 (TPS3).